The chain runs to 223 residues: Probable iron-sulfur cluster repair protein HI_1677 (223 aa).

Belongs to the RIC family.

It localises to the cytoplasm. Di-iron-containing protein involved in the repair of iron-sulfur clusters. In Haemophilus influenzae (strain ATCC 51907 / DSM 11121 / KW20 / Rd), this protein is Probable iron-sulfur cluster repair protein HI_1677.